The following is a 308-amino-acid chain: Probable D,D-dipeptide transport ATP-binding protein DdpF (308 aa).

Positions 8 to 243 (LRDVHINFPA…PAHPYTRLLL (236 aa)) constitute an ABC transporter domain. Residue 49 to 56 (GESGCGKS) participates in ATP binding.

It belongs to the ABC transporter superfamily. In terms of assembly, the complex is composed of two ATP-binding proteins (DdpD and DdpF), two transmembrane proteins (DdpB and DdpC) and a solute-binding protein (DdpA).

The protein resides in the cell inner membrane. Its function is as follows. Part of the ABC transporter complex DdpABCDF, which is probably involved in D,D-dipeptide transport. Probably responsible for energy coupling to the transport system. This Escherichia coli (strain K12) protein is Probable D,D-dipeptide transport ATP-binding protein DdpF.